A 224-amino-acid polypeptide reads, in one-letter code: Phosphoribosylformylglycinamidine synthase subunit PurQ (224 aa).

The region spanning 2–224 (KIAVIVFPGS…SLLEEGKVKG (223 aa)) is the Glutamine amidotransferase type-1 domain. Cysteine 86 acts as the Nucleophile in catalysis. Residues histidine 195 and glutamate 197 contribute to the active site.

As to quaternary structure, part of the FGAM synthase complex composed of 1 PurL, 1 PurQ and 2 PurS subunits.

It is found in the cytoplasm. The catalysed reaction is N(2)-formyl-N(1)-(5-phospho-beta-D-ribosyl)glycinamide + L-glutamine + ATP + H2O = 2-formamido-N(1)-(5-O-phospho-beta-D-ribosyl)acetamidine + L-glutamate + ADP + phosphate + H(+). The enzyme catalyses L-glutamine + H2O = L-glutamate + NH4(+). The protein operates within purine metabolism; IMP biosynthesis via de novo pathway; 5-amino-1-(5-phospho-D-ribosyl)imidazole from N(2)-formyl-N(1)-(5-phospho-D-ribosyl)glycinamide: step 1/2. Functionally, part of the phosphoribosylformylglycinamidine synthase complex involved in the purines biosynthetic pathway. Catalyzes the ATP-dependent conversion of formylglycinamide ribonucleotide (FGAR) and glutamine to yield formylglycinamidine ribonucleotide (FGAM) and glutamate. The FGAM synthase complex is composed of three subunits. PurQ produces an ammonia molecule by converting glutamine to glutamate. PurL transfers the ammonia molecule to FGAR to form FGAM in an ATP-dependent manner. PurS interacts with PurQ and PurL and is thought to assist in the transfer of the ammonia molecule from PurQ to PurL. The protein is Phosphoribosylformylglycinamidine synthase subunit PurQ of Ligilactobacillus salivarius (strain UCC118) (Lactobacillus salivarius).